A 54-amino-acid chain; its full sequence is Secreted virulence factor MC69 (54 aa).

A signal peptide spans 1-16; sequence MKAAFVLALCASLASA. The cysteines at positions 36 and 46 are disulfide-linked.

Belongs to the MC69 virulence factor family.

The protein resides in the secreted. Its function is as follows. Secreted protein required for appressorial penetration of intact host epidermal cells and for pathogenicity. In Pyricularia oryzae (strain 70-15 / ATCC MYA-4617 / FGSC 8958) (Rice blast fungus), this protein is Secreted virulence factor MC69.